A 165-amino-acid polypeptide reads, in one-letter code: SsrA-binding protein (165 aa).

Over residues 135–158 the composition is skewed to basic and acidic residues; sequence QAHDKRQDMARRDAQREVTRELGR. A disordered region spans residues 135–165; sequence QAHDKRQDMARRDAQREVTRELGRRVKGMTN.

The protein belongs to the SmpB family.

It localises to the cytoplasm. Functionally, required for rescue of stalled ribosomes mediated by trans-translation. Binds to transfer-messenger RNA (tmRNA), required for stable association of tmRNA with ribosomes. tmRNA and SmpB together mimic tRNA shape, replacing the anticodon stem-loop with SmpB. tmRNA is encoded by the ssrA gene; the 2 termini fold to resemble tRNA(Ala) and it encodes a 'tag peptide', a short internal open reading frame. During trans-translation Ala-aminoacylated tmRNA acts like a tRNA, entering the A-site of stalled ribosomes, displacing the stalled mRNA. The ribosome then switches to translate the ORF on the tmRNA; the nascent peptide is terminated with the 'tag peptide' encoded by the tmRNA and targeted for degradation. The ribosome is freed to recommence translation, which seems to be the essential function of trans-translation. This Mycolicibacterium gilvum (strain PYR-GCK) (Mycobacterium gilvum (strain PYR-GCK)) protein is SsrA-binding protein.